A 120-amino-acid chain; its full sequence is NAD(P)H-quinone oxidoreductase subunit 3, chloroplastic (120 aa).

The next 3 helical transmembrane spans lie at 9 to 29 (IFWA…LISG), 64 to 84 (MFAL…PWAM), and 88 to 108 (VLGV…IVGL).

The protein belongs to the complex I subunit 3 family. In terms of assembly, NDH is composed of at least 16 different subunits, 5 of which are encoded in the nucleus.

It is found in the plastid. The protein resides in the chloroplast thylakoid membrane. It catalyses the reaction a plastoquinone + NADH + (n+1) H(+)(in) = a plastoquinol + NAD(+) + n H(+)(out). It carries out the reaction a plastoquinone + NADPH + (n+1) H(+)(in) = a plastoquinol + NADP(+) + n H(+)(out). Functionally, NDH shuttles electrons from NAD(P)H:plastoquinone, via FMN and iron-sulfur (Fe-S) centers, to quinones in the photosynthetic chain and possibly in a chloroplast respiratory chain. The immediate electron acceptor for the enzyme in this species is believed to be plastoquinone. Couples the redox reaction to proton translocation, and thus conserves the redox energy in a proton gradient. In Ranunculus macranthus (Large buttercup), this protein is NAD(P)H-quinone oxidoreductase subunit 3, chloroplastic.